The following is a 63-amino-acid chain: Large ribosomal subunit protein uL30 (63 aa).

This sequence belongs to the universal ribosomal protein uL30 family. Part of the 50S ribosomal subunit.

This Stenotrophomonas maltophilia (strain K279a) protein is Large ribosomal subunit protein uL30.